A 79-amino-acid polypeptide reads, in one-letter code: MAEFKEQVLDILEEVCENDIVKENLDVQLFEEGILDSFAVVSLLVEFQERLEIEVSISDFDRDEWATPNMVIKKLEEIR.

The region spanning 2-79 is the Carrier domain; sequence AEFKEQVLDI…MVIKKLEEIR (78 aa). At Ser-37 the chain carries O-(pantetheine 4'-phosphoryl)serine.

Belongs to the DltC family. In terms of processing, 4'-phosphopantetheine is transferred from CoA to a specific serine of apo-DCP.

Its subcellular location is the cytoplasm. Its pathway is cell wall biogenesis; lipoteichoic acid biosynthesis. Functionally, carrier protein involved in the D-alanylation of lipoteichoic acid (LTA). The loading of thioester-linked D-alanine onto DltC is catalyzed by D-alanine--D-alanyl carrier protein ligase DltA. The DltC-carried D-alanyl group is further transferred to cell membrane phosphatidylglycerol (PG) by forming an ester bond, probably catalyzed by DltD. D-alanylation of LTA plays an important role in modulating the properties of the cell wall in Gram-positive bacteria, influencing the net charge of the cell wall. This chain is D-alanyl carrier protein, found in Bacillus mycoides (strain KBAB4) (Bacillus weihenstephanensis).